Here is a 304-residue protein sequence, read N- to C-terminus: GTPase Era (304 aa).

The 169-residue stretch at 11–179 folds into the Era-type G domain; the sequence is YCGFIAIVGR…QKIVRKSLRE (169 aa). The segment at 19 to 26 is G1; the sequence is GRPNVGKS. 19–26 lines the GTP pocket; it reads GRPNVGKS. The tract at residues 45-49 is G2; it reads QTTRH. Positions 66-69 are G3; the sequence is DTPG. GTP-binding positions include 66–70 and 128–131; these read DTPGL and NKVD. Positions 128–131 are G4; that stretch reads NKVD. A G5 region spans residues 158-160; it reads ISA. A KH type-2 domain is found at 210-287; that stretch reads TGEELPYSVT…HLELWVKVKA (78 aa).

It belongs to the TRAFAC class TrmE-Era-EngA-EngB-Septin-like GTPase superfamily. Era GTPase family. In terms of assembly, monomer.

The protein resides in the cytoplasm. It localises to the cell inner membrane. In terms of biological role, an essential GTPase that binds both GDP and GTP, with rapid nucleotide exchange. Plays a role in 16S rRNA processing and 30S ribosomal subunit biogenesis and possibly also in cell cycle regulation and energy metabolism. The sequence is that of GTPase Era from Actinobacillus pleuropneumoniae serotype 5b (strain L20).